Reading from the N-terminus, the 175-residue chain is NADH-ubiquinone oxidoreductase chain 6 (175 aa).

Helical transmembrane passes span 1-21 (MMTY…VGFS), 25-45 (SPIY…GIVL), 47-67 (FGGS…MLVV), 88-108 (AVLG…CYIL), and 149-169 (YGTW…LVIM).

This sequence belongs to the complex I subunit 6 family. As to quaternary structure, core subunit of respiratory chain NADH dehydrogenase (Complex I) which is composed of 45 different subunits.

It is found in the mitochondrion inner membrane. The catalysed reaction is a ubiquinone + NADH + 5 H(+)(in) = a ubiquinol + NAD(+) + 4 H(+)(out). Functionally, core subunit of the mitochondrial membrane respiratory chain NADH dehydrogenase (Complex I) which catalyzes electron transfer from NADH through the respiratory chain, using ubiquinone as an electron acceptor. Essential for the catalytic activity and assembly of complex I. The polypeptide is NADH-ubiquinone oxidoreductase chain 6 (MT-ND6) (Phoca vitulina (Harbor seal)).